The following is a 215-amino-acid chain: Ras-related protein Rab-42 (215 aa).

Residues G19, G21, K22, T23, and T44 each contribute to the GTP site. Residues T23, T44, and D68 each contribute to the Mg(2+) site. Residues G71, K128, D130, A157, and K158 each contribute to the GTP site. A disordered region spans residues 196–215 (HRSPNPRSSSRKQDSGTCQC). S-geranylgeranyl cysteine attachment occurs at residues C213 and C215.

The protein belongs to the small GTPase superfamily. Rab family. Requires Mg(2+) as cofactor.

The protein resides in the membrane. It carries out the reaction GTP + H2O = GDP + phosphate + H(+). Regulated by guanine nucleotide exchange factors (GEFs) which promote the exchange of bound GDP for free GTP. Regulated by GTPase activating proteins (GAPs) which increase the GTP hydrolysis activity. Inhibited by GDP dissociation inhibitors (GDIs). The small GTPases Rab are key regulators of intracellular membrane trafficking, from the formation of transport vesicles to their fusion with membranes. Rabs cycle between an inactive GDP-bound form and an active GTP-bound form that is able to recruit to membranes different sets of downstream effectors directly responsible for vesicle formation, movement, tethering and fusion. The physiological function of RAB42 remains undefined. The polypeptide is Ras-related protein Rab-42 (Mus musculus (Mouse)).